The primary structure comprises 120 residues: C-C motif chemokine 23 (120 aa).

The first 21 residues, 1–21 (MKVSVAALSCLMLVTALGSQA), serve as a signal peptide directing secretion. Disulfide bonds link Cys54/Cys78, Cys55/Cys94, and Cys65/Cys105.

Belongs to the intercrine beta (chemokine CC) family. The N-terminal is proteolytically cleaved by proteases associated with inflammatory responses. The processed forms, CCL23(19-99), CCL23(22-99), CCL23(27-99) and CCL23(30-99) exhibit increase in CCR1-mediated signaling and chemotaxis assays in vitro. In terms of tissue distribution, high levels in adult lung, liver, skeletal muscle and pancreas. Moderate levels in fetal liver, adult bone marrow and placenta. The short form is the major species and the longer form was detected only in very low abundance. CCL23(19-99), CCL23(22-99), CCL23(27-99), CCL23(30-99) are found in high levels in synovial fluids from rheumatoid patients.

The protein localises to the secreted. Shows chemotactic activity for monocytes, resting T-lymphocytes, and neutrophils, but not for activated lymphocytes. Inhibits proliferation of myeloid progenitor cells in colony formation assays. This protein can bind heparin. Binds CCR1. CCL23(19-99), CCL23(22-99), CCL23(27-99), CCL23(30-99) are more potent chemoattractants than CCL23. The polypeptide is C-C motif chemokine 23 (CCL23) (Homo sapiens (Human)).